A 280-amino-acid polypeptide reads, in one-letter code: Probable endonuclease lcl3 (280 aa).

The helical transmembrane segment at 50–67 (TLIPTLILTTAILSAARF) threads the bilayer. The region spanning 89-257 (RSIYGKVTSV…KLKGNGMWKG (169 aa)) is the TNase-like domain. Residue R140 is part of the active site. Ca(2+) is bound at residue D145. Catalysis depends on residues E148 and R188.

Belongs to the LCL3 family.

The protein resides in the mitochondrion. It localises to the membrane. The polypeptide is Probable endonuclease lcl3 (lcl3) (Emericella nidulans (strain FGSC A4 / ATCC 38163 / CBS 112.46 / NRRL 194 / M139) (Aspergillus nidulans)).